The primary structure comprises 161 residues: Large ribosomal subunit protein uL15 (161 aa).

Residues 1–44 form a disordered region; the sequence is MKLSEIADNAGSRKKRMRVGRGIGSGKGKTAGRGGKGQTARSGV. Over residues 21 to 37 the composition is skewed to gly residues; that stretch reads RGIGSGKGKTAGRGGKG.

The protein belongs to the universal ribosomal protein uL15 family. Part of the 50S ribosomal subunit.

Functionally, binds to the 23S rRNA. The sequence is that of Large ribosomal subunit protein uL15 from Rhodopseudomonas palustris (strain BisA53).